A 448-amino-acid chain; its full sequence is Glutamyl-tRNA reductase (448 aa).

Substrate is bound by residues 49–52 (TCNR), Ser109, 114–116 (ETQ), and Gln120. Residue Cys50 is the Nucleophile of the active site. Residue 189 to 194 (GAGEMS) coordinates NADP(+).

This sequence belongs to the glutamyl-tRNA reductase family. Homodimer.

It catalyses the reaction (S)-4-amino-5-oxopentanoate + tRNA(Glu) + NADP(+) = L-glutamyl-tRNA(Glu) + NADPH + H(+). The protein operates within porphyrin-containing compound metabolism; protoporphyrin-IX biosynthesis; 5-aminolevulinate from L-glutamyl-tRNA(Glu): step 1/2. Its function is as follows. Catalyzes the NADPH-dependent reduction of glutamyl-tRNA(Glu) to glutamate 1-semialdehyde (GSA). This is Glutamyl-tRNA reductase from Staphylococcus aureus (strain MRSA252).